Consider the following 404-residue polypeptide: MNQTLDNIVSLAKQCRGHHHYDISIEQIVVSHEAFNQLAAYLRYKQYKKVVVVADNRTFTAAGRSLCDKLKNESVLYTVCLIQSDENEDVIADERAIMQVLLETPNDVDAFIAVGAGTVHDITRFSSYKMKVPFISVPTAPSVDGFTSMGAPLIIRGVKKTIQAQAPIAVFADTDVLCQAPKAMIAAGFGDMVAKYTSLADWQFAHWMANEPYCPLVYQLTIQSLNACVDHMEDIAAGNEKGIHVLMDALLQSGIAMLLMGQSYSASGAEHHLSHYWEMEFLRQNKRQVLHGAKVGVSTPIIVEHYQRVFWPLLSELKQRPKSMDETIWERLKIYTDSIQELLESLPSPERIRAMVEKVGGAVAPQQLGIDPLLVERSLKEAHRLRLNRFTMLYCLNECMLMEG.

NAD(+)-binding positions include aspartate 55, 117 to 121, and 139 to 142; these read GTVHD and TAPS. A substrate-binding site is contributed by aspartate 144. Serine 148 is an NAD(+) binding site. A substrate-binding site is contributed by aspartate 191. 2 residues coordinate Ni(2+): aspartate 191 and histidine 271. Histidine 275 lines the substrate pocket. Position 291 (histidine 291) interacts with Ni(2+).

This sequence belongs to the glycerol-1-phosphate dehydrogenase family. As to quaternary structure, homodimer. It depends on Ni(2+) as a cofactor.

The protein localises to the cytoplasm. The catalysed reaction is sn-glycerol 1-phosphate + NAD(+) = dihydroxyacetone phosphate + NADH + H(+). It carries out the reaction sn-glycerol 1-phosphate + NADP(+) = dihydroxyacetone phosphate + NADPH + H(+). Functionally, catalyzes the NAD(P)H-dependent reduction of dihydroxyacetonephosphate (DHAP or glycerone phosphate) to glycerol 1-phosphate (G1P). The G1P thus generated is probably used for the synthesis of phosphoglycerolipids in Gram-positive bacterial species. The chain is Glycerol-1-phosphate dehydrogenase [NAD(P)+] from Geobacillus thermodenitrificans (strain NG80-2).